The following is a 244-amino-acid chain: UPF0246 protein SGO_1307 (244 aa).

It belongs to the UPF0246 family.

This Streptococcus gordonii (strain Challis / ATCC 35105 / BCRC 15272 / CH1 / DL1 / V288) protein is UPF0246 protein SGO_1307.